The sequence spans 310 residues: Ribosomal RNA small subunit methyltransferase H (310 aa).

S-adenosyl-L-methionine-binding positions include 33–35 (GGH), D52, F79, D98, and Q105.

It belongs to the methyltransferase superfamily. RsmH family.

The protein resides in the cytoplasm. It catalyses the reaction cytidine(1402) in 16S rRNA + S-adenosyl-L-methionine = N(4)-methylcytidine(1402) in 16S rRNA + S-adenosyl-L-homocysteine + H(+). Functionally, specifically methylates the N4 position of cytidine in position 1402 (C1402) of 16S rRNA. This is Ribosomal RNA small subunit methyltransferase H from Campylobacter jejuni subsp. doylei (strain ATCC BAA-1458 / RM4099 / 269.97).